Reading from the N-terminus, the 241-residue chain is Octanoyltransferase (241 aa).

In terms of domain architecture, BPL/LPL catalytic spans 38 to 227; it reads AGGPDTLLLL…AVCNALDGAL (190 aa). Residues 85 to 92, 157 to 159, and 170 to 172 each bind substrate; these read RGGKITWH, AIG, and GFA. Cys-188 functions as the Acyl-thioester intermediate in the catalytic mechanism.

This sequence belongs to the LipB family.

Its subcellular location is the cytoplasm. It carries out the reaction octanoyl-[ACP] + L-lysyl-[protein] = N(6)-octanoyl-L-lysyl-[protein] + holo-[ACP] + H(+). Its pathway is protein modification; protein lipoylation via endogenous pathway; protein N(6)-(lipoyl)lysine from octanoyl-[acyl-carrier-protein]: step 1/2. Functionally, catalyzes the transfer of endogenously produced octanoic acid from octanoyl-acyl-carrier-protein onto the lipoyl domains of lipoate-dependent enzymes. Lipoyl-ACP can also act as a substrate although octanoyl-ACP is likely to be the physiological substrate. The sequence is that of Octanoyltransferase from Mycobacterium marinum (strain ATCC BAA-535 / M).